Consider the following 249-residue polypeptide: O-methyltransferase adaD (249 aa).

A compositionally biased stretch (low complexity) spans 1–15; that stretch reads MSSVTLTTTTTTTST. Residues 1 to 26 are disordered; the sequence is MSSVTLTTTTTTTSTPPKPTPKDEPQ.

This sequence belongs to the methyltransferase superfamily.

The catalysed reaction is 2-acetyl-3,4a,8,10,11,12a-hexahydroxy-1,4,4a,5,12,12a-hexahydrotetracene-1,12-dione + S-adenosyl-L-methionine = TAN-1612 + S-adenosyl-L-homocysteine + H(+). It participates in secondary metabolite biosynthesis. Its function is as follows. O-methyltransferase; part of the gene cluster that mediates the biosynthesis of the linear tetracyclic TAN-1612 neuropeptide Y receptor antagonist. The decaketide backbone of TAN-1612 is synthesized by the non-reducing polyketide synthase adaA via condensation of one acetyl-CoA starter unit with 9 malonyl-CoA units. The FAD-dependent monooxygenase adaC then performs hydroxylation at C2 while the polaketide chain is still attached to the NRPKS adaA. The alpha-hydroxylation step at C2 appears to be crucial for the following C18-C1 Claisen cyclization and release of the C9-hydroxyl version of TAN-1612 from the NRPKS adaA, two steps performed by the lactamase-like protein adaB. Finally, the O-methyltransferase adaD performs the C9 O-methylation to complete the biosynthesis of TAN-1612. The chain is O-methyltransferase adaD from Aspergillus niger.